A 538-amino-acid chain; its full sequence is Calcium-dependent protein kinase 8 (538 aa).

The tract at residues 1–26 (MGNCCGTPATAEEGGKRRRRGKQKKA) is disordered. A lipid anchor (N-myristoyl glycine) is attached at G2. The span at 16–25 (KRRRRGKQKK) shows a compositional bias: basic residues. Positions 64 to 322 (YELGGELGRG…AEQVLEHPWL (259 aa)) constitute a Protein kinase domain. ATP is bound by residues 70–78 (LGRGEFGIT) and K93. Catalysis depends on D188, which acts as the Proton acceptor. Residues 328–358 (MPDIPLGDAVRARLQQFAAMNKLKKKALKVI) form an autoinhibitory domain region. EF-hand domains are found at residues 365–400 (EEAA…LGNQ), 401–436 (MPDS…VRKI), 437–472 (GNDE…EIDG), and 473–508 (NDED…GTDW). Positions 378, 380, 382, 384, 389, 414, 416, 418, 425, 450, 452, 454, 456, 461, 486, 488, 490, 492, and 497 each coordinate Ca(2+).

It belongs to the protein kinase superfamily. Ser/Thr protein kinase family. CDPK subfamily.

Its subcellular location is the membrane. The catalysed reaction is L-seryl-[protein] + ATP = O-phospho-L-seryl-[protein] + ADP + H(+). It carries out the reaction L-threonyl-[protein] + ATP = O-phospho-L-threonyl-[protein] + ADP + H(+). Activated by calcium. Autophosphorylation may play an important role in the regulation of the kinase activity. Its function is as follows. May play a role in signal transduction pathways that involve calcium as a second messenger. This Oryza sativa subsp. japonica (Rice) protein is Calcium-dependent protein kinase 8.